The sequence spans 256 residues: POU domain class 2-associating factor 1 (256 aa).

Residues 1–23 (MLWQKPTAPEQAPAPARPYQGVR) form a disordered region. Residues 16–38 (ARPYQGVRVKEPVKELLRRKRGH) form the OCA domain.

The protein belongs to the POU2AF family. As to quaternary structure, interacts with POU2F1/OCT1 and POU2F2/OCT2; the interaction increases POU2F1 and POU2F2 transactivation activity. In terms of processing, ubiquitinated; mediated by SIAH1 or SIAH2 and leading to its subsequent proteasomal degradation. As to expression, B-cell specific. Detected in mainly in spleen, but also in thymus, periphral blood leukocyte and small intestine.

It is found in the nucleus. Transcriptional coactivator that specifically associates with either POU2F1/OCT1 or POU2F2/OCT2. It boosts the POU2F1/OCT1 mediated promoter activity and to a lesser extent, that of POU2F2/OCT2. It recognizes the POU domains of POU2F1/OCT1 and POU2F2/OCT2. It is essential for the response of B-cells to antigens and required for the formation of germinal centers. Regulates IL6 expression in B cells as POU2F2/OCT2 coactivator. The polypeptide is POU domain class 2-associating factor 1 (Homo sapiens (Human)).